Here is a 313-residue protein sequence, read N- to C-terminus: WD repeat-containing protein 82 (313 aa).

WD repeat units follow at residues 19 to 58 (ENSD…PKRT), 105 to 144 (GHSK…CQGL), 146 to 184 (HLQG…KGPF), 192 to 231 (DRTC…VMHT), 236 to 276 (NNSK…KVAV), and 280 to 313 (KHTG…TIDD).

It belongs to the WD repeat SWD2 family. Component of the SET1/COMPASS complex. Component of the PNUTS-PP1 phosphatase complex.

It localises to the nucleus. Its subcellular location is the chromosome. The protein resides in the cytoplasm. Functionally, regulatory component of the SET1/COMPASS complex implicated in the tethering of this complex to transcriptional start sites of active genes. Facilitates histone H3 'Lys-4' methylation (H3K4me) via recruitment of the SETD1A or SETD1B to the 'Ser-5' phosphorylated C-terminal domain (CTD) of RNA polymerase II large subunit (POLR2A). Component of the PNUTS-PP1 protein phosphatase complex, a protein phosphatase 1 (PP1) complex that promotes RNA polymerase II transcription pause-release, allowing transcription elongation. This Xenopus tropicalis (Western clawed frog) protein is WD repeat-containing protein 82 (wdr82).